We begin with the raw amino-acid sequence, 317 residues long: DNA-directed RNA polymerase subunit alpha (317 aa).

Positions 1–234 (MKQFVRPEFI…AHLEFFIDLN (234 aa)) are alpha N-terminal domain (alpha-NTD). The interval 249–317 (DDKELDRTVE…ASLGLAFRQS (69 aa)) is alpha C-terminal domain (alpha-CTD).

Belongs to the RNA polymerase alpha chain family. As to quaternary structure, homodimer. The RNAP catalytic core consists of 2 alpha, 1 beta, 1 beta' and 1 omega subunit. When a sigma factor is associated with the core the holoenzyme is formed, which can initiate transcription.

The enzyme catalyses RNA(n) + a ribonucleoside 5'-triphosphate = RNA(n+1) + diphosphate. DNA-dependent RNA polymerase catalyzes the transcription of DNA into RNA using the four ribonucleoside triphosphates as substrates. This is DNA-directed RNA polymerase subunit alpha from Mycoplasma capricolum subsp. capricolum (strain California kid / ATCC 27343 / NCTC 10154).